The chain runs to 296 residues: Ribosomal RNA small subunit methyltransferase H (296 aa).

Residues 30 to 32 (GGH), aspartate 49, phenylalanine 76, aspartate 97, and glutamine 104 each bind S-adenosyl-L-methionine.

Belongs to the methyltransferase superfamily. RsmH family.

It is found in the cytoplasm. It catalyses the reaction cytidine(1402) in 16S rRNA + S-adenosyl-L-methionine = N(4)-methylcytidine(1402) in 16S rRNA + S-adenosyl-L-homocysteine + H(+). Specifically methylates the N4 position of cytidine in position 1402 (C1402) of 16S rRNA. The chain is Ribosomal RNA small subunit methyltransferase H from Mesomycoplasma hyopneumoniae (strain 7448) (Mycoplasma hyopneumoniae).